Consider the following 597-residue polypeptide: Gigaxonin (597 aa).

Residues 30–99 (CDAHLVLDGE…IFSGQIRLNE (70 aa)) enclose the BTB domain. Residues 134–236 (CIGIRDFALH…DSSYLREQML (103 aa)) form the BACK domain. 6 Kelch repeats span residues 274 to 326 (CIVT…SAEG), 327 to 374 (FLFV…EIDG), 376 to 421 (LYIL…AMKK), 422 to 468 (KIYA…GVAM), 470 to 522 (LYVF…VYGA), and 528 to 574 (SIYV…AALR).

In terms of assembly, interacts with TBCB. Interacts with CUL3. Part of a complex that contains CUL3, RBX1 and GAN. Interacts (via BTB domain) with UBA1. Interacts (via Kelch domains) with MAP1B (via C-terminus) and MAP1S (via C-terminus). In terms of processing, ubiquitinated by E3 ubiquitin ligase complex formed by CUL3 and RBX1 and probably targeted for proteasome-independent degradation. In terms of tissue distribution, expressed in brain, heart and muscle.

Its subcellular location is the cytoplasm. The protein localises to the cytoskeleton. The protein operates within protein modification; protein ubiquitination. Functionally, probable cytoskeletal component that directly or indirectly plays an important role in neurofilament architecture. May act as a substrate-specific adapter of an E3 ubiquitin-protein ligase complex which mediates the ubiquitination and subsequent proteasomal degradation of target proteins. Controls degradation of TBCB. Controls degradation of MAP1B and MAP1S, and is critical for neuronal maintenance and survival. In Homo sapiens (Human), this protein is Gigaxonin (GAN).